A 102-amino-acid polypeptide reads, in one-letter code: Protein PDF (102 aa).

Positions 1-24 are cleaved as a signal peptide; sequence MARYTYLVALVLLAICCQWGYCGA. An Alanine amide modification is found at Ala-100.

Belongs to the arthropod PDH family. As to expression, predominantly expressed in adult head. Expressed at higher level in males than in females. In adult brain, it is specifically expressed in the ventral lateral neurons (LNvs) as well as in 2-4 tritocerebral cells and 4-6 abdominal cells.

The protein resides in the secreted. Its function is as follows. Neuropeptide PDF is the main transmitter regulating circadian locomotor rhythms. Required to maintain behavioral rhythms under constant conditions by coordinating pacemaker interactions in the circadian system. Together with CCHa1, involved in regulating intensity and periodicity of daytime activity, possibly by modulating rhythmic expression of circadian protein PER/period in a subset of clock neurons, but not TIM/timeless. Acts on small and large ventral lateral neurons to control sleep and regulates the state transition from sleep to wake. The protein is Protein PDF (Pdf) of Drosophila melanogaster (Fruit fly).